A 255-amino-acid chain; its full sequence is Syntaxin-6 (255 aa).

Ser-2 is modified (N-acetylserine). Ser-2 is modified (phosphoserine). The segment at 2–168 (SMEDPFFVVK…QAQQQLIVEQ (167 aa)) is required for interaction with VPS51. Residues 2–234 (SMEDPFFVVK…VSHMTSDRRQ (233 aa)) are Cytoplasmic-facing. Positions 41–74 (EEIDWTTNELRNNLRSIEWDLEDLDETISIVEAN) form a coiled coil. Phosphoserine is present on residues Ser-129 and Ser-152. The t-SNARE coiled-coil homology domain occupies 163-225 (QLIVEQQDEQ…DNVMKKLAKV (63 aa)). Residues 235–255 (WCAIAILFAVLVVVLILFLVL) traverse the membrane as a helical; Anchor for type IV membrane protein segment.

It belongs to the syntaxin family. In terms of assembly, identified in a complex containing STX6, STX12 and VAMP4. This complex also includes VTI1A. Binds EEA1. Interacts with VPS45A and GOPC. Interacts with MARCHF2; the interaction promotes MARCHF2-mediated ubiquitination and degradation of CFTR. Interacts with MARCHF3. Interacts with BLTP3B (via C-terminal coiled-coil domain). Interacts with BAIAP3; this interaction is increased in the presence of calcium. Interacts with VPS13B.

It localises to the golgi apparatus membrane. It is found in the golgi apparatus. The protein resides in the trans-Golgi network membrane. Its subcellular location is the recycling endosome membrane. In terms of biological role, SNARE promoting movement of transport vesicles to target membranes. Targets endosomes to the trans-Golgi network, and may therefore function in retrograde trafficking. Together with SNARE STX12, promotes movement of vesicles from endosomes to the cell membrane, and may therefore function in the endocytic recycling pathway. This is Syntaxin-6 (Stx6) from Mus musculus (Mouse).